Consider the following 206-residue polypeptide: Methyltransferase-like 26 (206 aa).

It belongs to the UPF0585 family.

The chain is Methyltransferase-like 26 from Danio rerio (Zebrafish).